Reading from the N-terminus, the 279-residue chain is Small ribosomal subunit protein uS2 (279 aa).

Acidic residues-rich tracts occupy residues Met-1–Val-18, Thr-28–Asn-42, and Ala-65–Asp-81. The disordered stretch occupies residues Met-1–Asp-81.

The protein belongs to the universal ribosomal protein uS2 family.

This chain is Small ribosomal subunit protein uS2, found in Haloquadratum walsbyi (strain DSM 16790 / HBSQ001).